The sequence spans 342 residues: Glycerol-3-phosphate dehydrogenase [NAD(P)+] (342 aa).

3 residues coordinate NADPH: Ser-13, Trp-14, and Lys-108. The sn-glycerol 3-phosphate site is built by Lys-108, Gly-139, and Ser-141. Residue Ala-143 participates in NADPH binding. Sn-glycerol 3-phosphate contacts are provided by Lys-194, Asp-247, Ser-257, Arg-258, and Asn-259. The active-site Proton acceptor is Lys-194. Arg-258 contacts NADPH. Residues Val-282 and Glu-284 each contribute to the NADPH site.

The protein belongs to the NAD-dependent glycerol-3-phosphate dehydrogenase family.

It is found in the cytoplasm. The catalysed reaction is sn-glycerol 3-phosphate + NAD(+) = dihydroxyacetone phosphate + NADH + H(+). It catalyses the reaction sn-glycerol 3-phosphate + NADP(+) = dihydroxyacetone phosphate + NADPH + H(+). Its pathway is membrane lipid metabolism; glycerophospholipid metabolism. Catalyzes the reduction of the glycolytic intermediate dihydroxyacetone phosphate (DHAP) to sn-glycerol 3-phosphate (G3P), the key precursor for phospholipid synthesis. This is Glycerol-3-phosphate dehydrogenase [NAD(P)+] from Lactococcus lactis subsp. cremoris (strain MG1363).